A 263-amino-acid polypeptide reads, in one-letter code: 3'-5' ssDNA/RNA exonuclease TatD (263 aa).

Positions 91, 127, and 152 each coordinate a divalent metal cation.

Belongs to the metallo-dependent hydrolases superfamily. TatD-type hydrolase family. TatD subfamily. Monomer. Mg(2+) is required as a cofactor.

It localises to the cytoplasm. Functionally, 3'-5' exonuclease that prefers single-stranded DNA and RNA. May play a role in the H(2)O(2)-induced DNA damage repair. The chain is 3'-5' ssDNA/RNA exonuclease TatD from Cronobacter sakazakii (strain ATCC BAA-894) (Enterobacter sakazakii).